The primary structure comprises 246 residues: Phycocyanobilin:ferredoxin oxidoreductase (246 aa).

The protein belongs to the HY2 family.

The catalysed reaction is (2R,3Z)-phycocyanobilin + 4 oxidized [2Fe-2S]-[ferredoxin] = biliverdin IXalpha + 4 reduced [2Fe-2S]-[ferredoxin] + 4 H(+). Catalyzes the four-electron reduction of biliverdin IX-alpha (2-electron reduction at both the A and D rings); the reaction proceeds via an isolatable 2-electron intermediate, 181,182-dihydrobiliverdin. This Synechococcus sp. (strain CC9902) protein is Phycocyanobilin:ferredoxin oxidoreductase.